A 179-amino-acid chain; its full sequence is Putative undecaprenyl-phosphate N-acetylgalactosaminyl 1-phosphate transferase (179 aa).

Residues 39–59 (IWFALIGLAIALPMIAVFSIL) form a helical membrane-spanning segment.

This sequence belongs to the bacterial sugar transferase family.

The protein localises to the cell membrane. The catalysed reaction is di-trans,octa-cis-undecaprenyl phosphate + UDP-N-acetyl-alpha-D-galactosamine = N-acetyl-alpha-D-galactosaminyl-di-trans,octa-cis-undecaprenyl diphosphate + UMP. It functions in the pathway cell wall biogenesis; teichuronic acid biosynthesis. In terms of biological role, might mediate the very first reaction in teichuronic synthesis, i.e. the formation of lipid-linked N-acetylglucosamine. The protein is Putative undecaprenyl-phosphate N-acetylgalactosaminyl 1-phosphate transferase (tuaA) of Bacillus subtilis (strain 168).